The primary structure comprises 360 residues: MTTTLQQRSTANVWDRFCEWITSTENRIYIGWFGVLMIPTLVSAIACFVIAFIAAPPVDIDGIREPVAGSLLYGNNIISGAVVPSSNAIGLHFYPIWEAASLDEWLYNGGPYQLVIFHFLIGVACYLGREWELSYRLGMRPWICVAFSAPVAAATAVFLIYPIGQGSFSDGMPLGISGTFNFMIVFQAEHNILMHPFHMLGVAGVFGGSLFSAMHGSLVTSSLVRETTETESQNYGYKFGQEEETYNIVAAHGYFGRLIFQYASFNNSRSLHFFLAAWPVIGIWFTALGVSTMAFNLNGFNFNQSIIDSQGRVIGTWADVINRANLGMEVMHERNAHNFPLDLAAGDVAPVALTAPPING.

3 helical membrane-spanning segments follow: residues 29-46 (YIGW…SAIA), 118-133 (HFLI…EWEL), and 142-156 (WICV…AATA). Residue histidine 118 coordinates chlorophyll a. Position 126 (tyrosine 126) interacts with pheophytin a. [CaMn4O5] cluster contacts are provided by aspartate 170 and glutamate 189. The chain crosses the membrane as a helical span at residues 197 to 218 (FHMLGVAGVFGGSLFSAMHGSL). Histidine 198 serves as a coordination point for chlorophyll a. A quinone is bound by residues histidine 215 and 264 to 265 (SF). Fe cation is bound at residue histidine 215. Residue histidine 272 coordinates Fe cation. Residues 274–288 (FLAAWPVIGIWFTAL) form a helical membrane-spanning segment. The [CaMn4O5] cluster site is built by histidine 332, glutamate 333, aspartate 342, and alanine 344. Residues 345–360 (AGDVAPVALTAPPING) constitute a propeptide that is removed on maturation.

This sequence belongs to the reaction center PufL/M/PsbA/D family. As to quaternary structure, PSII is composed of 1 copy each of membrane proteins PsbA, PsbB, PsbC, PsbD, PsbE, PsbF, PsbH, PsbI, PsbJ, PsbK, PsbL, PsbM, PsbT, PsbX, PsbY, PsbZ, Psb30/Ycf12, peripheral proteins PsbO, CyanoQ (PsbQ), PsbU, PsbV and a large number of cofactors. It forms dimeric complexes. The D1/D2 heterodimer binds P680, chlorophylls that are the primary electron donor of PSII, and subsequent electron acceptors. It shares a non-heme iron and each subunit binds pheophytin, quinone, additional chlorophylls, carotenoids and lipids. D1 provides most of the ligands for the Mn4-Ca-O5 cluster of the oxygen-evolving complex (OEC). There is also a Cl(-1) ion associated with D1 and D2, which is required for oxygen evolution. The PSII complex binds additional chlorophylls, carotenoids and specific lipids. serves as cofactor. Tyr-161 forms a radical intermediate that is referred to as redox-active TyrZ, YZ or Y-Z. In terms of processing, C-terminally processed by CtpA; processing is essential to allow assembly of the oxygen-evolving complex and thus photosynthetic growth.

The protein resides in the cellular thylakoid membrane. It catalyses the reaction 2 a plastoquinone + 4 hnu + 2 H2O = 2 a plastoquinol + O2. Its function is as follows. Photosystem II (PSII) is a light-driven water:plastoquinone oxidoreductase that uses light energy to abstract electrons from H(2)O, generating O(2) and a proton gradient subsequently used for ATP formation. It consists of a core antenna complex that captures photons, and an electron transfer chain that converts photonic excitation into a charge separation. The D1/D2 (PsbA/PsbD) reaction center heterodimer binds P680, the primary electron donor of PSII as well as several subsequent electron acceptors. This chain is Photosystem II protein D1, found in Trichormus azollae (Anabaena azollae).